Reading from the N-terminus, the 38-residue chain is Conotoxin FVIA (38 aa).

Residues 1–12 (ILSLSLLDRSTR) constitute a propeptide that is removed on maturation. 3 disulfide bridges follow: Cys-13/Cys-28, Cys-20/Cys-32, and Cys-27/Cys-37. Position 37 is a cysteine amide (Cys-37).

Belongs to the conotoxin O1 superfamily. In terms of tissue distribution, expressed by the venom duct.

It localises to the secreted. In terms of biological role, omega-conotoxins act at presynaptic membranes, they bind and block voltage-gated calcium channels (Cav). This peptide reversibly and selectively inhibits Cav2.2/CACNA1B (IC(50)=11.5 nM) voltage-gated calcium channels. Channel time recovery after toxin exposure is short (about 50 seconds). In vivo, it effectively and dose-dependently reduces nociceptive behavior in the formalin test and in neuropathic pain models, and reduces mechanical and thermal allodynia in the tail nerve injury rat model. It also shows significant analgesic effects on writhing in mouse neurotransmitter- and cytokine-induced pain models, though it has no effect on acute thermal pain and interferon-gamma-induced pain. It also depresses blood pressure immediately after administration, but pressure recovers relatively quickly and completely. This Conus fulmen (Thunderbolt cone) protein is Conotoxin FVIA.